The sequence spans 534 residues: CTP synthase (534 aa).

The amidoligase domain stretch occupies residues 1-267 (MTKYIFVTGG…DQIVCDHLKL (267 aa)). Residue S13 coordinates CTP. S13 contributes to the UTP binding site. ATP is bound at residue 14–19 (SIGKGI). An L-glutamine-binding site is contributed by Y54. Position 71 (D71) interacts with ATP. D71 and E141 together coordinate Mg(2+). CTP is bound by residues 148–150 (DIE), 188–193 (KTKPTQ), and K224. UTP-binding positions include 188–193 (KTKPTQ) and K224. 240–242 (RDV) provides a ligand contact to ATP. The Glutamine amidotransferase type-1 domain maps to 292–534 (KIALVGKYVE…FVTAAIKNSN (243 aa)). L-glutamine is bound at residue G354. C381 functions as the Nucleophile; for glutamine hydrolysis in the catalytic mechanism. L-glutamine contacts are provided by residues 382–385 (LGMQ), E405, and R463. Active-site residues include H508 and E510.

Belongs to the CTP synthase family. As to quaternary structure, homotetramer.

It catalyses the reaction UTP + L-glutamine + ATP + H2O = CTP + L-glutamate + ADP + phosphate + 2 H(+). The enzyme catalyses L-glutamine + H2O = L-glutamate + NH4(+). It carries out the reaction UTP + NH4(+) + ATP = CTP + ADP + phosphate + 2 H(+). It functions in the pathway pyrimidine metabolism; CTP biosynthesis via de novo pathway; CTP from UDP: step 2/2. Its activity is regulated as follows. Allosterically activated by GTP, when glutamine is the substrate; GTP has no effect on the reaction when ammonia is the substrate. The allosteric effector GTP functions by stabilizing the protein conformation that binds the tetrahedral intermediate(s) formed during glutamine hydrolysis. Inhibited by the product CTP, via allosteric rather than competitive inhibition. Functionally, catalyzes the ATP-dependent amination of UTP to CTP with either L-glutamine or ammonia as the source of nitrogen. Regulates intracellular CTP levels through interactions with the four ribonucleotide triphosphates. The protein is CTP synthase of Streptococcus pyogenes serotype M18 (strain MGAS8232).